Reading from the N-terminus, the 210-residue chain is ATP-dependent dethiobiotin synthetase BioD (210 aa).

12 to 17 (NVGKTH) is an ATP binding site. Threonine 16 provides a ligand contact to Mg(2+). Lysine 37 is a catalytic residue. Threonine 41 provides a ligand contact to substrate. Glutamate 114 contributes to the Mg(2+) binding site. 114 to 117 (EGAG) contributes to the ATP binding site.

Belongs to the dethiobiotin synthetase family. In terms of assembly, homodimer. It depends on Mg(2+) as a cofactor.

Its subcellular location is the cytoplasm. It catalyses the reaction (7R,8S)-7,8-diammoniononanoate + CO2 + ATP = (4R,5S)-dethiobiotin + ADP + phosphate + 3 H(+). Its pathway is cofactor biosynthesis; biotin biosynthesis; biotin from 7,8-diaminononanoate: step 1/2. Catalyzes a mechanistically unusual reaction, the ATP-dependent insertion of CO2 between the N7 and N8 nitrogen atoms of 7,8-diaminopelargonic acid (DAPA, also called 7,8-diammoniononanoate) to form a ureido ring. This chain is ATP-dependent dethiobiotin synthetase BioD, found in Sulfurovum sp. (strain NBC37-1).